We begin with the raw amino-acid sequence, 312 residues long: Large ribosomal subunit protein uL10 (312 aa).

The interval 287–312 (AAAAPAAKKEEPKEESDDDMGFGLFD) is disordered.

Belongs to the universal ribosomal protein uL10 family. P0 forms a pentameric complex by interaction with dimers of P1 and P2. Post-translationally, phosphorylated.

Functionally, ribosomal protein P0 is the functional equivalent of E.coli protein L10. This Caenorhabditis elegans protein is Large ribosomal subunit protein uL10.